Reading from the N-terminus, the 176-residue chain is Acireductone dioxygenase (176 aa).

Residues His91, His93, Glu97, and His136 each coordinate Fe(2+). His91, His93, Glu97, and His136 together coordinate Ni(2+).

It belongs to the acireductone dioxygenase (ARD) family. Monomer. Fe(2+) serves as cofactor. The cofactor is Ni(2+).

It carries out the reaction 1,2-dihydroxy-5-(methylsulfanyl)pent-1-en-3-one + O2 = 3-(methylsulfanyl)propanoate + CO + formate + 2 H(+). It catalyses the reaction 1,2-dihydroxy-5-(methylsulfanyl)pent-1-en-3-one + O2 = 4-methylsulfanyl-2-oxobutanoate + formate + 2 H(+). It functions in the pathway amino-acid biosynthesis; L-methionine biosynthesis via salvage pathway; L-methionine from S-methyl-5-thio-alpha-D-ribose 1-phosphate: step 5/6. Its function is as follows. Catalyzes 2 different reactions between oxygen and the acireductone 1,2-dihydroxy-3-keto-5-methylthiopentene (DHK-MTPene) depending upon the metal bound in the active site. Fe-containing acireductone dioxygenase (Fe-ARD) produces formate and 2-keto-4-methylthiobutyrate (KMTB), the alpha-ketoacid precursor of methionine in the methionine recycle pathway. Ni-containing acireductone dioxygenase (Ni-ARD) produces methylthiopropionate, carbon monoxide and formate, and does not lie on the methionine recycle pathway. The polypeptide is Acireductone dioxygenase (Picosynechococcus sp. (strain ATCC 27264 / PCC 7002 / PR-6) (Agmenellum quadruplicatum)).